Here is a 417-residue protein sequence, read N- to C-terminus: RQSLRLLSDGNDSXDIRHLSRLLDNLGSVDQQFRQLRHSDSPAENDRMGDTRIAALETGSFKNTWQAIRPQLNLESGVFRHAVRLSLVVAAACTIVEALNLNLGYWILLTRLFVCQPNYTATKSRVYQRIAGTVLGVIVGSLVPYFTPSVETKLWIVIAGTTLFFMTRTYKYSFSTFFITIQALTSLSLAGLDVYAAMPVRIIDTIIGASLAWAAVSYLWPDWKYLTLERTAALAVCSSGTYLQKIAERLKTGETGDDIEYRITRRRAHEHTAALSSTLSDMSSEPAKFADTCNPALPCSKPATALTGYISALGHTAAKCTKNAAPTLPHSSTLPPNTPPTSSNTCPTWDPTTFRRHWIHCAANSAPSAPAAAEHKATSSSNSSNSSPGSSNPTTAPTDKFRTGSPKTQPEKISAFW.

The next 4 helical transmembrane spans lie at 87–107, 130–150, 177–197, and 202–222; these read LVVA…GYWI, IAGT…TPSV, FFIT…VYAA, and IIDT…LWPD. Residues 366-398 show a composition bias toward low complexity; that stretch reads APSAPAAAEHKATSSSNSSNSSPGSSNPTTAPT. Positions 366 to 417 are disordered; that stretch reads APSAPAAAEHKATSSSNSSNSSPGSSNPTTAPTDKFRTGSPKTQPEKISAFW.

Belongs to the YccS/YhfK family.

The protein resides in the cell membrane. This is an uncharacterized protein from Neisseria gonorrhoeae.